The chain runs to 428 residues: Histidinol dehydrogenase (428 aa).

The substrate site is built by S234, Q256, and H259. 2 residues coordinate Zn(2+): Q256 and H259. Active-site proton acceptor residues include E323 and H324. Residues H324, D357, E411, and H416 each coordinate substrate. Position 357 (D357) interacts with Zn(2+). H416 is a Zn(2+) binding site.

The protein belongs to the histidinol dehydrogenase family. Requires Zn(2+) as cofactor.

The enzyme catalyses L-histidinol + 2 NAD(+) + H2O = L-histidine + 2 NADH + 3 H(+). The protein operates within amino-acid biosynthesis; L-histidine biosynthesis; L-histidine from 5-phospho-alpha-D-ribose 1-diphosphate: step 9/9. Functionally, catalyzes the sequential NAD-dependent oxidations of L-histidinol to L-histidinaldehyde and then to L-histidine. The sequence is that of Histidinol dehydrogenase from Campylobacter jejuni subsp. jejuni serotype O:2 (strain ATCC 700819 / NCTC 11168).